Consider the following 264-residue polypeptide: Thymidylate synthase (264 aa).

Arginine 21 is a dUMP binding site. Position 51 (histidine 51) interacts with (6R)-5,10-methylene-5,6,7,8-tetrahydrofolate. 126 to 127 (RR) contacts dUMP. The active-site Nucleophile is cysteine 146. DUMP contacts are provided by residues 166 to 169 (RSAD), asparagine 177, and 207 to 209 (HLY). A (6R)-5,10-methylene-5,6,7,8-tetrahydrofolate-binding site is contributed by aspartate 169. Alanine 263 lines the (6R)-5,10-methylene-5,6,7,8-tetrahydrofolate pocket.

The protein belongs to the thymidylate synthase family. Bacterial-type ThyA subfamily. Homodimer.

It is found in the cytoplasm. The catalysed reaction is dUMP + (6R)-5,10-methylene-5,6,7,8-tetrahydrofolate = 7,8-dihydrofolate + dTMP. Its pathway is pyrimidine metabolism; dTTP biosynthesis. Its function is as follows. Catalyzes the reductive methylation of 2'-deoxyuridine-5'-monophosphate (dUMP) to 2'-deoxythymidine-5'-monophosphate (dTMP) while utilizing 5,10-methylenetetrahydrofolate (mTHF) as the methyl donor and reductant in the reaction, yielding dihydrofolate (DHF) as a by-product. This enzymatic reaction provides an intracellular de novo source of dTMP, an essential precursor for DNA biosynthesis. The sequence is that of Thymidylate synthase from Legionella pneumophila (strain Corby).